We begin with the raw amino-acid sequence, 122 residues long: Large ribosomal subunit protein uL14 (122 aa).

Belongs to the universal ribosomal protein uL14 family. Part of the 50S ribosomal subunit. Forms a cluster with proteins L3 and L19. In the 70S ribosome, L14 and L19 interact and together make contacts with the 16S rRNA in bridges B5 and B8.

Binds to 23S rRNA. Forms part of two intersubunit bridges in the 70S ribosome. This chain is Large ribosomal subunit protein uL14, found in Synechococcus sp. (strain JA-2-3B'a(2-13)) (Cyanobacteria bacterium Yellowstone B-Prime).